Consider the following 979-residue polypeptide: Peptidyl-glycine alpha-amidating monooxygenase (979 aa).

An N-terminal signal peptide occupies residues 1-24 (MAGRARSRLLLLLGLLALQSSCLA). Residues 1–497 (MAGRARSRLL…EGPWEPELAG (497 aa)) form a peptidylglycine alpha-hydroxylating monooxygenase region. A propeptide spanning residues 25 to 34 (FRSPLSVFKR) is cleaved from the precursor. The Intragranular portion of the chain corresponds to 35 to 869 (FKETTRSFSN…KKLIKDPGSG (835 aa)). 5 disulfide bridges follow: Cys46–Cys185, Cys80–Cys125, Cys113–Cys130, Cys226–Cys333, and Cys292–Cys314. Cu(2+) contacts are provided by His106 and His107. Positions 171, 241, 243, and 313 each coordinate Cu(2+). Positions 498 to 823 (DFHVEEALEW…SRLEVEHRSV (326 aa)) are peptidyl-alpha-hydroxyglycine alpha-amidating lyase. NHL repeat units lie at residues 501 to 544 (VEEA…NSFD), 570 to 611 (AEIL…LEPR), 620 to 665 (LGRS…FSPS), and 673 to 717 (GEES…FKTD). Ca(2+) is bound at residue Val520. Arg533 is an a protein binding site. A Zn(2+)-binding site is contributed by His585. A Ca(2+)-binding site is contributed by Leu587. Cys634 and Cys655 form a disulfide bridge. Tyr654 contacts a protein. Residue His690 participates in Zn(2+) binding. A disulfide bridge connects residues Cys702 and Cys713. Residue Arg706 coordinates a protein. Asn765 is a glycosylation site (N-linked (GlcNAc...) asparagine). The NHL 5 repeat unit spans residues 769-812 (GEIIDVFKPVRKHFDMPHDIVASEDGTVYIGDAHTNTVWKFTLT). Position 786 (His786) interacts with Zn(2+). Asp787 contacts Ca(2+). Residues 870–893 (VPVVLITTLLVIPVVVLLAIAMFI) traverse the membrane as a helical segment. Residues 894–979 (RWKKSRAFGD…APLPTPAPSS (86 aa)) lie on the Cytoplasmic side of the membrane. Residues Ser924, Ser925, Ser935, and Ser948 each carry the phosphoserine modification. The tract at residues 931–948 (NFFASRKGYSRKGFDRVS) is interaction with RASSF9. The tract at residues 943–979 (GFDRVSTEGSDQEKDEDDGSESEEEYSAPLPTPAPSS) is disordered. The residue at position 949 (Thr949) is a Phosphothreonine. At Ser952 the chain carries Phosphoserine; by UHMK1. Positions 955-968 (EKDEDDGSESEEEY) are enriched in acidic residues. Ser964 is subject to Phosphoserine.

It in the C-terminal section; belongs to the peptidyl-alpha-hydroxyglycine alpha-amidating lyase family. In the N-terminal section; belongs to the copper type II ascorbate-dependent monooxygenase family. In terms of assembly, monomer. Interacts with RASSF9. Zn(2+) serves as cofactor. Cu(2+) is required as a cofactor.

It localises to the cytoplasmic vesicle. Its subcellular location is the secretory vesicle membrane. The enzyme catalyses a [peptide]-C-terminal glycine + 2 L-ascorbate + O2 = a [peptide]-C-terminal (2S)-2-hydroxyglycine + 2 monodehydro-L-ascorbate radical + H2O. The catalysed reaction is a [peptide]-C-terminal (2S)-2-hydroxyglycine = a [peptide]-C-terminal amide + glyoxylate. It catalyses the reaction N-dodecanoylglycine + 2 L-ascorbate + O2 = N-dodecanoyl-(2S)-hydroxyglycine + 2 monodehydro-L-ascorbate radical + H2O. It carries out the reaction N-dodecanoyl-(2S)-hydroxyglycine = dodecanamide + glyoxylate. The enzyme catalyses N-(9Z,12Z,15Z)-octadecatrienoylglycine + 2 L-ascorbate + O2 = N-(9Z,12Z,15Z)-octadecatrienoyl-(2S)-hydroxyglycine + 2 monodehydro-L-ascorbate radical + H2O. The catalysed reaction is N-(9Z,12Z,15Z)-octadecatrienoyl-(2S)-hydroxyglycine = (9Z,12Z,15Z)-octadecatrienamide + glyoxylate. It catalyses the reaction N-(9Z-octadecenoyl)glycine + 2 L-ascorbate + O2 = N-(9Z-octadecenoyl)-(2S)-hydroxyglycine + 2 monodehydro-L-ascorbate radical + H2O. It carries out the reaction N-(9Z-octadecenoyl)-(2S)-hydroxyglycine = (9Z)-octadecenamide + glyoxylate. The enzyme catalyses N-tetradecanoylglycine + 2 L-ascorbate + O2 = N-tetradecanoyl-(2S)-hydroxyglycine + 2 monodehydro-L-ascorbate radical + H2O. The catalysed reaction is N-tetradecanoyl-(2S)-hydroxyglycine = tetradecamide + glyoxylate. It catalyses the reaction N-decanoylglycine + 2 L-ascorbate + O2 = N-decanoyl-(2S)-hydroxyglycine + 2 monodehydro-L-ascorbate radical + H2O. It carries out the reaction N-decanoyl-(2S)-hydroxyglycine = decanamide + glyoxylate. The enzyme catalyses N-octanoylglycine + 2 L-ascorbate + O2 = N-octanoyl-(2S)-hydroxyglycine + 2 monodehydro-L-ascorbate radical + H2O. The catalysed reaction is N-octanoyl-(2S)-hydroxyglycine = octanamide + glyoxylate. With respect to regulation, PAM activity is inhibited by EDTA, phenylglyoxal and diethyl pyrocarbonate. PAL activity is stimulated by cadmium and inhibited by mercury. In terms of biological role, bifunctional enzyme that catalyzes amidation of the C-terminus of proteins. Alpha-amidation is present at the C-terminus of many endocrine hormones and neuropeptides and is required for their activity. C-terminal amidation also takes place in response to protein fragmentation triggered by oxidative stress, promoting degradation of amidated protein fragments by the proteasome. Alpha-amidation involves two sequential reactions, both of which are catalyzed by separate catalytic domains of the enzyme. The first step, catalyzed by peptidyl alpha-hydroxylating monooxygenase (PHM) domain, is the copper-, ascorbate-, and O2- dependent stereospecific hydroxylation (with S stereochemistry) at the alpha-carbon (C-alpha) of the C-terminal glycine of the peptidylglycine substrate. The second step, catalyzed by the peptidylglycine amidoglycolate lyase (PAL) domain, is the zinc-dependent cleavage of the N-C-alpha bond, producing the alpha-amidated peptide and glyoxylate. Similarly, catalyzes the two-step conversion of an N-fatty acylglycine to a primary fatty acid amide and glyoxylate. In Mus musculus (Mouse), this protein is Peptidyl-glycine alpha-amidating monooxygenase.